Consider the following 347-residue polypeptide: Serpentine receptor class beta-2 (347 aa).

7 helical membrane-spanning segments follow: residues 27 to 47 (IAQL…YIFL), 62 to 82 (FLLV…AFLF), 108 to 128 (GNLS…GFSI), 146 to 166 (FLGP…LYHV), 194 to 214 (FWEL…FLLV), 246 to 266 (LIVS…TIFV), and 288 to 308 (ITVP…LSFM).

This sequence belongs to the nematode receptor-like protein srb family.

It is found in the membrane. This is Serpentine receptor class beta-2 (srb-2) from Caenorhabditis elegans.